Here is a 213-residue protein sequence, read N- to C-terminus: MFNQSYLNVYFICGTSDVPSHRTIHEVLEAALKAGITLFQFREKGESALKGNDKLVLAKELQHLCHQYDVPFIVNDDVSLAKEINADGIHVGQDDAKVKEIAQYFTDKIIGLSISDLDEYAKSDLTHVDYIGVGPIYPTPSKHDAHIPVGPEMIATFKEMNPQLPIVAIGGINTNNVAPIVEAGANGISVISAISKSENIENTVNRFKDFFNN.

4-amino-2-methyl-5-(diphosphooxymethyl)pyrimidine-binding positions include 40–44 (QFREK) and Asn75. Mg(2+) is bound by residues Asp76 and Asp95. Ser113 contacts 4-amino-2-methyl-5-(diphosphooxymethyl)pyrimidine. Position 139–141 (139–141 (TPS)) interacts with 2-[(2R,5Z)-2-carboxy-4-methylthiazol-5(2H)-ylidene]ethyl phosphate. Lys142 provides a ligand contact to 4-amino-2-methyl-5-(diphosphooxymethyl)pyrimidine. Residues Gly171 and 191-192 (IS) contribute to the 2-[(2R,5Z)-2-carboxy-4-methylthiazol-5(2H)-ylidene]ethyl phosphate site.

The protein belongs to the thiamine-phosphate synthase family. Mg(2+) is required as a cofactor.

It carries out the reaction 2-[(2R,5Z)-2-carboxy-4-methylthiazol-5(2H)-ylidene]ethyl phosphate + 4-amino-2-methyl-5-(diphosphooxymethyl)pyrimidine + 2 H(+) = thiamine phosphate + CO2 + diphosphate. It catalyses the reaction 2-(2-carboxy-4-methylthiazol-5-yl)ethyl phosphate + 4-amino-2-methyl-5-(diphosphooxymethyl)pyrimidine + 2 H(+) = thiamine phosphate + CO2 + diphosphate. The enzyme catalyses 4-methyl-5-(2-phosphooxyethyl)-thiazole + 4-amino-2-methyl-5-(diphosphooxymethyl)pyrimidine + H(+) = thiamine phosphate + diphosphate. The protein operates within cofactor biosynthesis; thiamine diphosphate biosynthesis; thiamine phosphate from 4-amino-2-methyl-5-diphosphomethylpyrimidine and 4-methyl-5-(2-phosphoethyl)-thiazole: step 1/1. In terms of biological role, condenses 4-methyl-5-(beta-hydroxyethyl)thiazole monophosphate (THZ-P) and 2-methyl-4-amino-5-hydroxymethyl pyrimidine pyrophosphate (HMP-PP) to form thiamine monophosphate (TMP). This Staphylococcus aureus (strain MSSA476) protein is Thiamine-phosphate synthase.